A 734-amino-acid chain; its full sequence is Putative protocadherin beta-18 (734 aa).

Cadherin domains lie at 1–79 (MWKT…TPTF), 80–188 (LNNH…APEF), 189–293 (EKPV…PPEI), 294–398 (AMTS…APIF), and 399–508 (TQTS…SPFV). A glycan (N-linked (GlcNAc...) asparagine) is linked at N115. Residues N365 and N383 are each glycosylated (N-linked (GlcNAc...) asparagine). Residue N514 is glycosylated (N-linked (GlcNAc...) asparagine). Residues 515–621 (GSAPCTELVP…GFSQPYLPLT (107 aa)) form the Cadherin 6 domain. A helical transmembrane segment spans residues 638–658 (VVALASVSSLFLFSVFLFVAV).

It is found in the cell membrane. Functionally, potential calcium-dependent cell-adhesion protein. The polypeptide is Putative protocadherin beta-18 (PCDHB18P) (Homo sapiens (Human)).